Reading from the N-terminus, the 386-residue chain is O-methyltransferase aunE (386 aa).

Tryptophan 200 contributes to the S-adenosyl-L-methionine binding site. Catalysis depends on histidine 299, which acts as the Proton acceptor.

This sequence belongs to the class I-like SAM-binding methyltransferase superfamily. Cation-independent O-methyltransferase family.

Its pathway is secondary metabolite biosynthesis. Functionally, O-methyltransferase; part of the gene cluster that mediates the biosynthesis of aurasperone B, a dimeric gamma-naphthopyrone. The first step in the biosynthesis of aurasperone B is the production of gamma-naphthopyrone precursor YWA1 by the non-reducing polyketide synthase albA, via condensation of one acetyl-CoA starter unit with 6 malonyl-CoA units. YWA1 is then methylated by aunE at position C-6 to yield foncesin which is further methylated at position C-8 by aunD to produce fonsecin B. A key enzyme in the biosynthetic pathway is the cytochrome P450 monooxygenase aunB which catalyzes the oxidative dimerization of fonsecin B to aurasperone B. AunB also catalyzes the oxidative dimerization of rubrofusarin B into aurasperone A. This is O-methyltransferase aunE from Aspergillus niger (strain ATCC MYA-4892 / CBS 513.88 / FGSC A1513).